The primary structure comprises 229 residues: Triosephosphate isomerase (229 aa).

6–8 serves as a coordination point for substrate; it reads NFK. H88 serves as the catalytic Electrophile. The active-site Proton acceptor is E157. 2 residues coordinate substrate: G163 and S193.

This sequence belongs to the triosephosphate isomerase family. As to quaternary structure, homodimer.

It is found in the cytoplasm. It carries out the reaction D-glyceraldehyde 3-phosphate = dihydroxyacetone phosphate. The protein operates within carbohydrate biosynthesis; gluconeogenesis. It participates in carbohydrate degradation; glycolysis; D-glyceraldehyde 3-phosphate from glycerone phosphate: step 1/1. Involved in the gluconeogenesis. Catalyzes stereospecifically the conversion of dihydroxyacetone phosphate (DHAP) to D-glyceraldehyde-3-phosphate (G3P). This Sulfurovum sp. (strain NBC37-1) protein is Triosephosphate isomerase.